The chain runs to 657 residues: MYRSSFLREVRKEKYERSDAYDELRGSPEFDSLAQAQGLENLQELNERFASYINRARVLEQRNTILRKQLETFQRMDELVGLDEAFAGQIEFNRQRMRELASDRAKLEREEKDAQRMLDEYHNKYRNEREYQQKLKETLERLNKEADEALLCNLELQIESQFLQDDINATKDRYKKNLMEIQTYVNILQQIIQTTPRVSPITTGISEEKLVAERRIPVLQSQLEEYKSILCQLQAQKYKLQTETTMLEQAIKNTQESYDDEIQLYNEQIENLRKGIEEAERTLEKYTTDCRQLVIYQQSLENELERYKRIIENEDSRLNSAIAGTPVTLFTQIYRPVQPQASRGRDITQAMQEIASVKPRQKALTKKLSRKKEIMSKDITDGLSPEKLYERTVEVFDQDQLEFRHEGSVTCEPGQEELELVEKEAVPEDVPDGAQISKAFDKLCNLVKEKIRVYKRPEAKVDSHPKGRYVLVTGEEGYEEPCFSSIPAGGGITVSTSNGKVTIGGDVEPIPELPEPSEPSEKEKRDICERRDEFETQDKLKEEEKEDLFEWGKIRGKIEQVTKYPDVSEPEAVPSPGLISPAEPGVLQETDHDREDKQGLLFREAGLPGSVSYEKVEVVESIEKFSDDRIQTYEETAMIVETMIEKTSKKKPGDKGS.

The interval 1–38 is head; that stretch reads MYRSSFLREVRKEKYERSDAYDELRGSPEFDSLAQAQG. In terms of domain architecture, IF rod spans 38–318; it reads GLENLQELNE…RIIENEDSRL (281 aa). The tract at residues 39–73 is coil 1A; sequence LENLQELNERFASYINRARVLEQRNTILRKQLETF. The interval 74 to 82 is linker 1; sequence QRMDELVGL. A coil 1B region spans residues 83–182; the sequence is DEAFAGQIEF…RYKKNLMEIQ (100 aa). Positions 183 to 199 are linker 12; it reads TYVNILQQIIQTTPRVS. The tract at residues 200–318 is coil 2; sequence PITTGISEEK…RIIENEDSRL (119 aa). Residues 319–657 form a tail region; that stretch reads NSAIAGTPVT…SKKKPGDKGS (339 aa). Disordered regions lie at residues 503–530 and 565–593; these read IGGD…ICER and PDVS…TDHD. The span at 519 to 530 shows a compositional bias: basic and acidic residues; that stretch reads PSEKEKRDICER.

Belongs to the intermediate filament family. As to expression, detected in eye lens fiber cells (at protein level). Detected in embryonic eye lens.

Its subcellular location is the cell membrane. The protein localises to the cytoplasm. It localises to the cytoskeleton. It is found in the cell cortex. In terms of biological role, required for the correct formation of lens intermediate filaments. The sequence is that of Filensin (BFSP1) from Gallus gallus (Chicken).